A 312-amino-acid polypeptide reads, in one-letter code: MEEFQQIPDFYGCYLLQSISKRQSFYIGSTPNPVRRLRQHNGSLSRGGAYRTKRDGTRPWEMVAIVYGFPSRIAALQFEHAWQHGYQTRYIKSQDRVVKTRKGGRSIHHKLAMITSLLKNEYFRYMDLTLHFFNQKVEEIWKNDKFNVSQTQESIDNNYTVSLSQDALTEINNDTIDDIMDVNEKNMELVQNLYSTTLAEKTKTLLLYKEKIDTGINTCQFCNKIIKHNLSGNISENLFAFCRDTSCTFVSHLACAYRYFMSNTELPKEDTIIPQSPKCPKCYTLLKWCDVIYYSIKLNKDNTTADDKKKTI.

The GIY-YIG domain occupies 9–92 (DFYGCYLLQS…QHGYQTRYIK (84 aa)). The SLX1-type zinc-finger motif lies at 219 to 282 (CQFCNKIIKH…IPQSPKCPKC (64 aa)).

Belongs to the SLX1 family. Forms a heterodimer with SLX4. A divalent metal cation serves as cofactor.

The protein localises to the nucleus. Its function is as follows. Catalytic subunit of the SLX1-SLX4 structure-specific endonuclease that resolves DNA secondary structures generated during DNA repair and recombination. Has endonuclease activity towards branched DNA substrates, introducing single-strand cuts in duplex DNA close to junctions with ss-DNA. In Candida glabrata (strain ATCC 2001 / BCRC 20586 / JCM 3761 / NBRC 0622 / NRRL Y-65 / CBS 138) (Yeast), this protein is Structure-specific endonuclease subunit SLX1.